Consider the following 246-residue polypeptide: Acetylglutamate kinase (246 aa).

Residues 30–31 (GG), R52, and N151 contribute to the substrate site.

This sequence belongs to the acetylglutamate kinase family. ArgB subfamily.

It is found in the cytoplasm. It catalyses the reaction N-acetyl-L-glutamate + ATP = N-acetyl-L-glutamyl 5-phosphate + ADP. It functions in the pathway amino-acid biosynthesis; L-arginine biosynthesis; N(2)-acetyl-L-ornithine from L-glutamate: step 2/4. Catalyzes the ATP-dependent phosphorylation of N-acetyl-L-glutamate. The polypeptide is Acetylglutamate kinase (Methanopyrus kandleri (strain AV19 / DSM 6324 / JCM 9639 / NBRC 100938)).